Here is a 397-residue protein sequence, read N- to C-terminus: Riboflavin biosynthesis protein RibBA (397 aa).

Residues 1–199 (MFHRIEEALE…IEDLIAYRRH (199 aa)) form a DHBP synthase region. D-ribulose 5-phosphate contacts are provided by residues 26 to 27 (RE), aspartate 31, 138 to 142 (RAGHT), and glutamate 162. A Mg(2+)-binding site is contributed by glutamate 27. Histidine 141 is a Mg(2+) binding site. The GTP cyclohydrolase II stretch occupies residues 200-397 (HETLVTREAE…VNKLGHLLNL (198 aa)). 250-254 (RVHSE) lines the GTP pocket. 3 residues coordinate Zn(2+): cysteine 255, cysteine 266, and cysteine 268. GTP-binding positions include glutamine 271, 293-295 (EGR), and threonine 315. The active-site Proton acceptor; for GTP cyclohydrolase activity is aspartate 327. Arginine 329 serves as the catalytic Nucleophile; for GTP cyclohydrolase activity. Threonine 350 and lysine 355 together coordinate GTP.

This sequence in the N-terminal section; belongs to the DHBP synthase family. The protein in the C-terminal section; belongs to the GTP cyclohydrolase II family. Mg(2+) serves as cofactor. Requires Mn(2+) as cofactor. Zn(2+) is required as a cofactor.

The catalysed reaction is D-ribulose 5-phosphate = (2S)-2-hydroxy-3-oxobutyl phosphate + formate + H(+). The enzyme catalyses GTP + 4 H2O = 2,5-diamino-6-hydroxy-4-(5-phosphoribosylamino)-pyrimidine + formate + 2 phosphate + 3 H(+). The protein operates within cofactor biosynthesis; riboflavin biosynthesis; 2-hydroxy-3-oxobutyl phosphate from D-ribulose 5-phosphate: step 1/1. It participates in cofactor biosynthesis; riboflavin biosynthesis; 5-amino-6-(D-ribitylamino)uracil from GTP: step 1/4. Functionally, catalyzes the conversion of D-ribulose 5-phosphate to formate and 3,4-dihydroxy-2-butanone 4-phosphate. Its function is as follows. Catalyzes the conversion of GTP to 2,5-diamino-6-ribosylamino-4(3H)-pyrimidinone 5'-phosphate (DARP), formate and pyrophosphate. The protein is Riboflavin biosynthesis protein RibBA of Bacillus cereus (strain ATCC 14579 / DSM 31 / CCUG 7414 / JCM 2152 / NBRC 15305 / NCIMB 9373 / NCTC 2599 / NRRL B-3711).